The sequence spans 118 residues: Cell division protein SepF (118 aa).

The interval 1-12 (MGIMSKILGGGG) is important for localization in a ring-like structure at midcell.

Homodimer. Does not oligomerize. Interacts with FtsZ2.

Its subcellular location is the cytoplasm. Involved in cell division. Probably acts as a membrane anchor for FstZ2, tethering its filaments to the division site. May be involved in septum closure. In Haloferax volcanii (strain ATCC 29605 / DSM 3757 / JCM 8879 / NBRC 14742 / NCIMB 2012 / VKM B-1768 / DS2) (Halobacterium volcanii), this protein is Cell division protein SepF.